The following is a 169-amino-acid chain: Ureidoglycolate lyase (169 aa).

Belongs to the ureidoglycolate lyase family. Homodimer. Ni(2+) serves as cofactor.

The enzyme catalyses (S)-ureidoglycolate = urea + glyoxylate. It participates in nitrogen metabolism; (S)-allantoin degradation. Its function is as follows. Catalyzes the catabolism of the allantoin degradation intermediate (S)-ureidoglycolate, generating urea and glyoxylate. Involved in the utilization of allantoin as nitrogen source. The chain is Ureidoglycolate lyase from Pseudomonas paraeruginosa (strain DSM 24068 / PA7) (Pseudomonas aeruginosa (strain PA7)).